Here is a 1189-residue protein sequence, read N- to C-terminus: Magnesium-chelatase subunit H (1189 aa).

The protein belongs to the Mg-chelatase subunit H family.

The catalysed reaction is protoporphyrin IX + Mg(2+) + ATP + H2O = Mg-protoporphyrin IX + ADP + phosphate + 3 H(+). Its pathway is porphyrin-containing compound metabolism; bacteriochlorophyll biosynthesis (light-independent). In terms of biological role, involved in bacteriochlorophyll pigment biosynthesis; introduces a magnesium ion into protoporphyrin IX to yield Mg-protoroporphyrin IX. This is Magnesium-chelatase subunit H (bchH) from Rhodobacter capsulatus (strain ATCC BAA-309 / NBRC 16581 / SB1003).